The primary structure comprises 463 residues: A-type ATP synthase subunit B (463 aa).

It belongs to the ATPase alpha/beta chains family. Has multiple subunits with at least A(3), B(3), C, D, E, F, H, I and proteolipid K(x).

The protein localises to the cell membrane. Its function is as follows. Component of the A-type ATP synthase that produces ATP from ADP in the presence of a proton gradient across the membrane. The B chain is a regulatory subunit. This is A-type ATP synthase subunit B from Aeropyrum pernix (strain ATCC 700893 / DSM 11879 / JCM 9820 / NBRC 100138 / K1).